The primary structure comprises 430 residues: tRNA(Ile)-lysidine synthase (430 aa).

21–26 (SGGLDS) contacts ATP.

This sequence belongs to the tRNA(Ile)-lysidine synthase family.

Its subcellular location is the cytoplasm. It catalyses the reaction cytidine(34) in tRNA(Ile2) + L-lysine + ATP = lysidine(34) in tRNA(Ile2) + AMP + diphosphate + H(+). Functionally, ligates lysine onto the cytidine present at position 34 of the AUA codon-specific tRNA(Ile) that contains the anticodon CAU, in an ATP-dependent manner. Cytidine is converted to lysidine, thus changing the amino acid specificity of the tRNA from methionine to isoleucine. This is tRNA(Ile)-lysidine synthase from Salmonella paratyphi A (strain ATCC 9150 / SARB42).